Consider the following 126-residue polypeptide: Large ribosomal subunit protein bL20 (126 aa).

It belongs to the bacterial ribosomal protein bL20 family.

In terms of biological role, binds directly to 23S ribosomal RNA and is necessary for the in vitro assembly process of the 50S ribosomal subunit. It is not involved in the protein synthesizing functions of that subunit. The protein is Large ribosomal subunit protein bL20 of Frankia casuarinae (strain DSM 45818 / CECT 9043 / HFP020203 / CcI3).